The chain runs to 454 residues: Toluate 1,2-dioxygenase subunit alpha (454 aa).

The Rieske domain occupies 51 to 148 (IYLAHESQIP…SFDCDGSHDL (98 aa)). [2Fe-2S] cluster-binding residues include cysteine 92, histidine 94, cysteine 112, and histidine 115. Fe cation contacts are provided by histidine 221 and histidine 226.

It belongs to the bacterial ring-hydroxylating dioxygenase alpha subunit family. This dioxygenase system consists of three proteins: the two subunits of the hydroxylase component (XylX and XylY), and an electron transfer component (XylZ). It depends on [2Fe-2S] cluster as a cofactor. The cofactor is Fe cation.

Its pathway is xenobiotic degradation; toluene degradation. The sequence is that of Toluate 1,2-dioxygenase subunit alpha (xylX) from Pseudomonas putida (Arthrobacter siderocapsulatus).